Consider the following 61-residue polypeptide: Small ribosomal subunit protein uS14 (61 aa).

Cysteine 24, cysteine 27, cysteine 40, and cysteine 43 together coordinate Zn(2+).

The protein belongs to the universal ribosomal protein uS14 family. Zinc-binding uS14 subfamily. In terms of assembly, part of the 30S ribosomal subunit. Contacts proteins S3 and S10. The cofactor is Zn(2+).

Binds 16S rRNA, required for the assembly of 30S particles and may also be responsible for determining the conformation of the 16S rRNA at the A site. In Trichlorobacter lovleyi (strain ATCC BAA-1151 / DSM 17278 / SZ) (Geobacter lovleyi), this protein is Small ribosomal subunit protein uS14.